The primary structure comprises 478 residues: Sphingomyelin synthase-related protein 1 (478 aa).

Residues 1-22 (MPAGSRAGSRLRSGSLPRPSRL) show a composition bias toward low complexity. The disordered stretch occupies residues 1-65 (MPAGSRAGSR…TAEEVEKEMA (65 aa)). An SAM domain is found at 75–141 (WTTKHVAVWL…MLSVRKLQKI (67 aa)). The next 6 helical transmembrane spans lie at 216–236 (ILSC…MVIV), 264–284 (FSMT…VLLL), 295–315 (LCSL…VTSL), 341–361 (AIWS…DYMF), 385–405 (FLHT…LAAH), and 410–430 (IDVF…HTLA). Over 431 to 478 (NTRAYHQSRRARIWFPMFSFFECNVNGTVPNEYCWPFSKPAIMKRLIG) the chain is Cytoplasmic.

It belongs to the sphingomyelin synthase family. In terms of tissue distribution, expressed ubiquitously with highest levels in macrophages and testis.

The protein localises to the endoplasmic reticulum membrane. It carries out the reaction an N-acylsphing-4-enine + a 1,2-diacyl-sn-glycero-3-phosphoethanolamine = an N-acylsphing-4-enine 1-phosphoethanolamine + a 1,2-diacyl-sn-glycerol. The enzyme catalyses an N-acylsphinganine + a 1,2-diacyl-sn-glycero-3-phosphoethanolamine = an N-acylsphinganine-1-phosphoethanolamine + a 1,2-diacyl-sn-glycerol. The catalysed reaction is an N-acyl-(4R)-4-hydroxysphinganine + a 1,2-diacyl-sn-glycero-3-phosphoethanolamine = an N-acyl-(4R)-4-hydroxysphinganine-1-phosphoethanolamine + a 1,2-diacyl-sn-glycerol. It catalyses the reaction N-hexadecanoylsphinganine + a 1,2-diacyl-sn-glycero-3-phosphoethanolamine = N-hexadecanoyl-sphinganine-1-phosphoethanolamine + a 1,2-diacyl-sn-glycerol. It carries out the reaction N-hexadecanoyl-(4R)-hydroxysphinganine + a 1,2-diacyl-sn-glycero-3-phosphoethanolamine = N-hexadecanoyl-(4R)-hydroxysphinganine-1-phosphoethanolamine + a 1,2-diacyl-sn-glycerol. It participates in sphingolipid metabolism. Synthesizes sphingolipids through transfer of a phosphatidyl head group from a glycerophospholipid on to the primary hydroxyl of a ceramide in the lumen of the endoplasmic reticulum. Catalyzes the synthesis of ceramide phosphoethanolamines (CPEs) (such as N-acylsphing-4-enine 1-phosphoethanolamine) by transferring phosphoethanolamine head group, which is smaller and more hydrophilic than the phosphocholine (PC) headgroup transferred in the canonical sphingomyelin synthesis (SMS) reaction by SMS1 or SMS2, from a phosphatidylethanolamine (1,2-diacyl-sn-glycero-3-phosphoethanolamine, PE) to a ceramide (such as N-acylsphing-4-enine). The larger PC prevents an efficient fit in the enzyme's catalytic pocket, leading to little or no SMS activity. In vitro, in the absence of ceramide, it has PLC activity with preference for phosphatidylinositol and phosphatidic acid, but also hydrolyzes phosphatidylethanolamine. This chain is Sphingomyelin synthase-related protein 1, found in Mus musculus (Mouse).